The primary structure comprises 190 residues: ATP-dependent Clp protease proteolytic subunit 2 (190 aa).

Ser-98 (nucleophile) is an active-site residue. His-123 is an active-site residue.

It belongs to the peptidase S14 family. Fourteen ClpP subunits assemble into 2 heptameric rings which stack back to back to give a disk-like structure with a central cavity, resembling the structure of eukaryotic proteasomes.

Its subcellular location is the cytoplasm. It carries out the reaction Hydrolysis of proteins to small peptides in the presence of ATP and magnesium. alpha-casein is the usual test substrate. In the absence of ATP, only oligopeptides shorter than five residues are hydrolyzed (such as succinyl-Leu-Tyr-|-NHMec, and Leu-Tyr-Leu-|-Tyr-Trp, in which cleavage of the -Tyr-|-Leu- and -Tyr-|-Trp bonds also occurs).. In terms of biological role, cleaves peptides in various proteins in a process that requires ATP hydrolysis. Has a chymotrypsin-like activity. Plays a major role in the degradation of misfolded proteins. The chain is ATP-dependent Clp protease proteolytic subunit 2 from Bacillus licheniformis (strain ATCC 14580 / DSM 13 / JCM 2505 / CCUG 7422 / NBRC 12200 / NCIMB 9375 / NCTC 10341 / NRRL NRS-1264 / Gibson 46).